Here is a 645-residue protein sequence, read N- to C-terminus: Threonine--tRNA ligase (645 aa).

A TGS domain is found at 1 to 63; the sequence is MEQINIQFPD…ETDGSIEIVT (63 aa). A catalytic region spans residues 242–540; it reads DHRKIGKELE…LTEETKGAFP (299 aa). Zn(2+) contacts are provided by C336, H387, and H517.

Belongs to the class-II aminoacyl-tRNA synthetase family. In terms of assembly, homodimer. Zn(2+) is required as a cofactor.

It is found in the cytoplasm. It carries out the reaction tRNA(Thr) + L-threonine + ATP = L-threonyl-tRNA(Thr) + AMP + diphosphate + H(+). Its function is as follows. Catalyzes the attachment of threonine to tRNA(Thr) in a two-step reaction: L-threonine is first activated by ATP to form Thr-AMP and then transferred to the acceptor end of tRNA(Thr). Also edits incorrectly charged L-seryl-tRNA(Thr). The chain is Threonine--tRNA ligase from Staphylococcus aureus (strain NCTC 8325 / PS 47).